The primary structure comprises 178 residues: Ribose 1,5-bisphosphate phosphokinase PhnN (178 aa).

9 to 16 provides a ligand contact to ATP; it reads GPSGSGKD.

Belongs to the ribose 1,5-bisphosphokinase family.

The catalysed reaction is alpha-D-ribose 1,5-bisphosphate + ATP = 5-phospho-alpha-D-ribose 1-diphosphate + ADP. It participates in metabolic intermediate biosynthesis; 5-phospho-alpha-D-ribose 1-diphosphate biosynthesis; 5-phospho-alpha-D-ribose 1-diphosphate from D-ribose 5-phosphate (route II): step 3/3. In terms of biological role, catalyzes the phosphorylation of ribose 1,5-bisphosphate to 5-phospho-D-ribosyl alpha-1-diphosphate (PRPP). The chain is Ribose 1,5-bisphosphate phosphokinase PhnN from Pantoea vagans (strain C9-1) (Pantoea agglomerans (strain C9-1)).